A 366-amino-acid polypeptide reads, in one-letter code: Putative RING-H2 finger protein ATL21C (366 aa).

Positions 1–23 are cleaved as a signal peptide; that stretch reads MTFSKQLFPFVFFLLFLVSLRHA. Residues 243–263 traverse the membrane as a helical segment; sequence LVLVISLSAVTVFVFPTCIAI. The RING-type; atypical zinc finger occupies 320–362; sequence CPICLSEYASKETVRFIPECDHCFHVECIDVWLKIHGSCPLCR.

The protein belongs to the RING-type zinc finger family. ATL subfamily.

Its subcellular location is the membrane. It catalyses the reaction S-ubiquitinyl-[E2 ubiquitin-conjugating enzyme]-L-cysteine + [acceptor protein]-L-lysine = [E2 ubiquitin-conjugating enzyme]-L-cysteine + N(6)-ubiquitinyl-[acceptor protein]-L-lysine.. The protein operates within protein modification; protein ubiquitination. The chain is Putative RING-H2 finger protein ATL21C (ATL21C) from Arabidopsis thaliana (Mouse-ear cress).